Consider the following 56-residue polypeptide: uncharacterized protein (56 aa).

This is an uncharacterized protein from Acheta domesticus (House cricket).